The primary structure comprises 451 residues: Phosphoglucosamine mutase (451 aa).

The active-site Phosphoserine intermediate is the S102. Positions 102, 242, 244, and 246 each coordinate Mg(2+). The residue at position 102 (S102) is a Phosphoserine.

Belongs to the phosphohexose mutase family. The cofactor is Mg(2+). Post-translationally, activated by phosphorylation.

It carries out the reaction alpha-D-glucosamine 1-phosphate = D-glucosamine 6-phosphate. Functionally, catalyzes the conversion of glucosamine-6-phosphate to glucosamine-1-phosphate. The sequence is that of Phosphoglucosamine mutase from Staphylococcus saprophyticus subsp. saprophyticus (strain ATCC 15305 / DSM 20229 / NCIMB 8711 / NCTC 7292 / S-41).